Reading from the N-terminus, the 64-residue chain is uncharacterized protein (64 aa).

The chain crosses the membrane as a helical span at residues 15 to 37 (VVVPRFVRFIVYVVLFTVAVQRV).

The protein belongs to the HHV-5 US34A protein family.

The protein localises to the host membrane. This is an uncharacterized protein from Homo sapiens (Human).